The sequence spans 258 residues: Tetraspanin-15 (258 aa).

Residues 1 to 20 (MGALGDSAYGARGRLIKFSY) lie on the Cytoplasmic side of the membrane. Residues 21-41 (IVTALISILFSISCICYGIWL) traverse the membrane as a helical segment. Topologically, residues 42–62 (LARRSQYAELVSPSLYVDVGR) are extracellular. A helical transmembrane segment spans residues 63 to 83 (ILVIISILSILNYLICFYAIF). Residues 84–93 (KEMRCFVTSC) are Cytoplasmic-facing. Residues 94–114 (AVASIVIAVMLIIGGCIGLNF) form a helical membrane-spanning segment. Over 115–223 (RDQLTHYTPL…STCYEPLQND (109 aa)) the chain is Extracellular. A helical transmembrane segment spans residues 224-244 (LLHVMNVASWLCITNAIVQII). Residues 245–258 (PSVAGCWYSKLIRK) lie on the Cytoplasmic side of the membrane.

Belongs to the tetraspanin (TM4SF) family. Interacts with doxa-1 and bli-3. In terms of tissue distribution, expressed in the body wall (hyp7 hypodermal syncitium), pharynx and vulva. Expressed in a punctate pattern along the thick region of the hypodermis.

The protein localises to the membrane. Functionally, plays a role in cuticle biogenesis. In complex with doxa-1 and the dual oxidase bli-3, promotes the generation of reactive oxygen species (ROS) and tyrosine cross-linking of collagen, thus stabilizing cuticular extracellular matrix. This chain is Tetraspanin-15, found in Caenorhabditis elegans.